The primary structure comprises 251 residues: GTP cyclohydrolase 1 type 2 homolog (251 aa).

A divalent metal cation contacts are provided by histidine 64, histidine 65, aspartate 102, histidine 219, and glutamate 223.

The protein belongs to the GTP cyclohydrolase I type 2/NIF3 family. Homohexamer.

The chain is GTP cyclohydrolase 1 type 2 homolog from Chlamydia trachomatis serovar D (strain ATCC VR-885 / DSM 19411 / UW-3/Cx).